A 617-amino-acid chain; its full sequence is ATP-dependent zinc metalloprotease FtsH (617 aa).

At 1 to 7 (MKIPFDR) the chain is on the cytoplasmic side. A helical transmembrane segment spans residues 8–28 (WLGWPTLLLLLLGLWLLGSSL). Topologically, residues 29 to 102 (RDQRTVEAVP…VSYRRVRESN (74 aa)) are periplasmic. The chain crosses the membrane as a helical span at residues 103 to 123 (WLSQLLSWMAGPLLLLGFWYF). The Cytoplasmic segment spans residues 124-617 (MSRRIDGQQG…GRPAAIRQVA (494 aa)). 198 to 205 (GPTGTGKT) is a binding site for ATP. His421 lines the Zn(2+) pocket. The active site involves Glu422. Positions 425 and 498 each coordinate Zn(2+).

It in the central section; belongs to the AAA ATPase family. This sequence in the C-terminal section; belongs to the peptidase M41 family. As to quaternary structure, homohexamer. Zn(2+) serves as cofactor.

It localises to the cell inner membrane. Functionally, acts as a processive, ATP-dependent zinc metallopeptidase for both cytoplasmic and membrane proteins. Plays a role in the quality control of integral membrane proteins. The polypeptide is ATP-dependent zinc metalloprotease FtsH (Methylibium petroleiphilum (strain ATCC BAA-1232 / LMG 22953 / PM1)).